We begin with the raw amino-acid sequence, 223 residues long: MRVLVVEDNALLRHHLKVQIQDAGHQVDDAEDAKEADYYLNEHLPDIAIVDLGLPDEDGLSLIRRWRSNDVSLPILVLTARESWQDKVEVLSAGADDYVTKPFHIEEVMARMQALMRRNSGLASQVISLPPFQVDLSRRELSINDEVIKLTAFEYTIMETLIRNNGKVVSKDSLMLQLYPDAELRESHTIDVLMGRLRKKIQAQYPQEVITTVRGQGYLFELR.

In terms of domain architecture, Response regulatory spans 2-116 (RVLVVEDNAL…EVMARMQALM (115 aa)). Aspartate 51 is modified (4-aspartylphosphate). Positions 124–222 (SQVISLPPFQ…VRGQGYLFEL (99 aa)) form a DNA-binding region, ompR/PhoB-type.

Post-translationally, phosphorylated by PhoQ.

The protein localises to the cytoplasm. In terms of biological role, member of the two-component regulatory system PhoQ/PhoP involved in virulence and adaptation to low Mg(2+) environments. Necessary for resistance to killing by polymorphonuclear leukocytes (PMNs) and cationic antimicrobial peptides (CAMP) they produce. The polypeptide is Virulence transcriptional regulatory protein PhoP (phoP) (Shigella flexneri).